A 364-amino-acid polypeptide reads, in one-letter code: 3-isopropylmalate dehydrogenase (364 aa).

An NAD(+)-binding site is contributed by 79 to 92 (GPKWEHLPAAEQPE). Residues Arg100, Arg110, Arg139, and Asp228 each contribute to the substrate site. Asp228, Asp252, and Asp256 together coordinate Mg(2+). 286–298 (GSAPDIAGKDIAN) is an NAD(+) binding site.

It belongs to the isocitrate and isopropylmalate dehydrogenases family. LeuB type 1 subfamily. As to quaternary structure, homodimer. Requires Mg(2+) as cofactor. It depends on Mn(2+) as a cofactor.

It is found in the cytoplasm. The catalysed reaction is (2R,3S)-3-isopropylmalate + NAD(+) = 4-methyl-2-oxopentanoate + CO2 + NADH. It participates in amino-acid biosynthesis; L-leucine biosynthesis; L-leucine from 3-methyl-2-oxobutanoate: step 3/4. Catalyzes the oxidation of 3-carboxy-2-hydroxy-4-methylpentanoate (3-isopropylmalate) to 3-carboxy-4-methyl-2-oxopentanoate. The product decarboxylates to 4-methyl-2 oxopentanoate. In Sodalis glossinidius (strain morsitans), this protein is 3-isopropylmalate dehydrogenase.